Here is a 96-residue protein sequence, read N- to C-terminus: ATP-dependent Clp protease adapter protein ClpS (96 aa).

This sequence belongs to the ClpS family. Binds to the N-terminal domain of the chaperone ClpA.

In terms of biological role, involved in the modulation of the specificity of the ClpAP-mediated ATP-dependent protein degradation. In Campylobacter jejuni subsp. jejuni serotype O:2 (strain ATCC 700819 / NCTC 11168), this protein is ATP-dependent Clp protease adapter protein ClpS.